Reading from the N-terminus, the 549-residue chain is Eukaryotic translation initiation factor 3 subunit D (549 aa).

A disordered region spans residues 101-130; sequence QSYQRGRARGQRGRGARGARTPGGMTTLNK. Basic residues predominate over residues 106–117; that stretch reads GRARGQRGRGAR. The interval 277-291 is RNA gate; that stretch reads EFDLLTVNETSVEPP. Residues 521-549 are disordered; the sequence is ESDASEESGDEQADTPFAPLYSYGNSKRV. Residues 523-533 are compositionally biased toward acidic residues; sequence DASEESGDEQA.

Belongs to the eIF-3 subunit D family. Component of the eukaryotic translation initiation factor 3 (eIF-3) complex.

The protein localises to the cytoplasm. In terms of biological role, mRNA cap-binding component of the eukaryotic translation initiation factor 3 (eIF-3) complex, which is involved in protein synthesis of a specialized repertoire of mRNAs and, together with other initiation factors, stimulates binding of mRNA and methionyl-tRNAi to the 40S ribosome. The eIF-3 complex specifically targets and initiates translation of a subset of mRNAs involved in cell proliferation. In the eIF-3 complex, eif3d specifically recognizes and binds the 7-methylguanosine cap of a subset of mRNAs. The polypeptide is Eukaryotic translation initiation factor 3 subunit D (Bombyx mori (Silk moth)).